The primary structure comprises 921 residues: Isoleucine--tRNA ligase (921 aa).

Positions 57–67 match the 'HIGH' region motif; it reads PYANGELHMGH. E552 lines the L-isoleucyl-5'-AMP pocket. Residues 593 to 597 carry the 'KMSKS' region motif; that stretch reads KMSKS. K596 lines the ATP pocket. Residues C888, C891, C908, and C911 each contribute to the Zn(2+) site.

It belongs to the class-I aminoacyl-tRNA synthetase family. IleS type 1 subfamily. As to quaternary structure, monomer. The cofactor is Zn(2+).

Its subcellular location is the cytoplasm. It carries out the reaction tRNA(Ile) + L-isoleucine + ATP = L-isoleucyl-tRNA(Ile) + AMP + diphosphate. Its function is as follows. Catalyzes the attachment of isoleucine to tRNA(Ile). As IleRS can inadvertently accommodate and process structurally similar amino acids such as valine, to avoid such errors it has two additional distinct tRNA(Ile)-dependent editing activities. One activity is designated as 'pretransfer' editing and involves the hydrolysis of activated Val-AMP. The other activity is designated 'posttransfer' editing and involves deacylation of mischarged Val-tRNA(Ile). This chain is Isoleucine--tRNA ligase, found in Listeria innocua serovar 6a (strain ATCC BAA-680 / CLIP 11262).